Reading from the N-terminus, the 444-residue chain is Bifunctional enolase 2/transcriptional activator (444 aa).

The substrate site is built by His163 and Glu172. The active-site Proton donor is Glu215. Residues Asp250, Glu300, and Asp327 each coordinate Mg(2+). Positions 300 and 327 each coordinate substrate. Lys352 functions as the Proton acceptor in the catalytic mechanism. Residues 379-382 (SHRS) and Lys403 contribute to the substrate site.

The protein belongs to the enolase family. Homodimer. It depends on Mg(2+) as a cofactor.

It localises to the cytoplasm. The protein resides in the cytosol. Its subcellular location is the nucleus. The protein localises to the mitochondrion outer membrane. It carries out the reaction (2R)-2-phosphoglycerate = phosphoenolpyruvate + H2O. It participates in carbohydrate degradation; glycolysis; pyruvate from D-glyceraldehyde 3-phosphate: step 4/5. Its function is as follows. Multifunctional enzyme that acts as an enolase involved in the metabolism and as a positive regulator of cold-responsive gene transcription. Binds to the cis-element the gene promoter of STZ/ZAT10, a zinc finger transcriptional repressor. The polypeptide is Bifunctional enolase 2/transcriptional activator (ENO2) (Arabidopsis thaliana (Mouse-ear cress)).